Consider the following 291-residue polypeptide: Phosphate import ATP-binding protein PstB (291 aa).

Residues 1-21 (MANKQIIDKNDDLQAHTDRND) form a disordered region. The 242-residue stretch at 45–286 (YSTKNLDLWY…PSDKQTEDYI (242 aa)) folds into the ABC transporter domain. 77–84 (GPSGCGKS) lines the ATP pocket.

The protein belongs to the ABC transporter superfamily. Phosphate importer (TC 3.A.1.7) family. The complex is composed of two ATP-binding proteins (PstB), two transmembrane proteins (PstC and PstA) and a solute-binding protein (PstS).

The protein localises to the cell membrane. It carries out the reaction phosphate(out) + ATP + H2O = ADP + 2 phosphate(in) + H(+). Part of the ABC transporter complex PstSACB involved in phosphate import. Responsible for energy coupling to the transport system. This is Phosphate import ATP-binding protein PstB from Staphylococcus saprophyticus subsp. saprophyticus (strain ATCC 15305 / DSM 20229 / NCIMB 8711 / NCTC 7292 / S-41).